A 348-amino-acid polypeptide reads, in one-letter code: Gamma-glutamyl hydrolase 1 (348 aa).

Residues 1–23 form the signal peptide; the sequence is MIDNNCLYKEELNRNSYSGLAKE. A Gamma-glutamyl hydrolase domain is found at 46-342; sequence SPDPNLNYRP…RGYDEVYIFT (297 aa). The active-site Nucleophile is the Cys156. The active site involves His269.

The protein belongs to the peptidase C26 family. In terms of tissue distribution, highly expressed in roots and at lower levels in leaves, stems and siliques.

Its subcellular location is the vacuole. It is found in the secreted. The protein localises to the extracellular space. It localises to the cell wall. It catalyses the reaction (6S)-5,6,7,8-tetrahydrofolyl-(gamma-L-Glu)(n) + (n-1) H2O = (6S)-5,6,7,8-tetrahydrofolate + (n-1) L-glutamate. Its function is as follows. Cleaves the polyglutamate sidechains of folate polyglutamates in the vacuole. Is important for polyglutamyl tail length determination before vacuolar exit. Plays a role in folate stability and intracellular folate content. This is Gamma-glutamyl hydrolase 1 (GGH1) from Arabidopsis thaliana (Mouse-ear cress).